We begin with the raw amino-acid sequence, 422 residues long: MTVKTTVSSKDIDEAYLQLKDIVKETPLQKDHYLSQKYDCKVYLKREDLQWVRSFKLRGAYNAIIALDEADRQNGITCASAGNHAQGVAYTASKLNLNAVIFMPVTTPLQKINQVKFFGGDNTEVVLTGDTFDDCLKEALVYTEENKMNFIDPFNNIYTIAGQGTLAKEILEQSKDNDIQFDYLFAAIGGGGLISGVGTYFKTHSPETSIIGVEPAGAASMYTSVVLENQLVTLPDIDKFVDGASVARVGQITFDISKDIVDDYIQVHEGAVCSTILDMYSKQAIIAEPAGALSIAALDQYQAEIKGKTVVCVVSGGNNDINRMKEIEERSLLFEEMKHYFILNFPQRPGALREFVNEVLGPKDDITKFEYLKKSSQNTGTVIIGIQLNNHKDLGHLKANVDEFDKSNIYINENKMLYSLLI.

Lysine 56 carries the N6-(pyridoxal phosphate)lysine modification. Pyridoxal 5'-phosphate is bound by residues asparagine 83, 189–193 (GGGGL), and serine 315. Residues 339–413 (HYFILNFPQR…FDKSNIYINE (75 aa)) enclose the ACT-like domain.

It belongs to the serine/threonine dehydratase family. In terms of assembly, homotetramer. Pyridoxal 5'-phosphate serves as cofactor.

It catalyses the reaction L-threonine = 2-oxobutanoate + NH4(+). It participates in amino-acid biosynthesis; L-isoleucine biosynthesis; 2-oxobutanoate from L-threonine: step 1/1. Its function is as follows. Catalyzes the anaerobic formation of alpha-ketobutyrate and ammonia from threonine in a two-step reaction. The first step involved a dehydration of threonine and a production of enamine intermediates (aminocrotonate), which tautomerizes to its imine form (iminobutyrate). Both intermediates are unstable and short-lived. The second step is the nonenzymatic hydrolysis of the enamine/imine intermediates to form 2-ketobutyrate and free ammonia. In the low water environment of the cell, the second step is accelerated by RidA. This chain is L-threonine dehydratase biosynthetic IlvA (ilvA), found in Staphylococcus saprophyticus subsp. saprophyticus (strain ATCC 15305 / DSM 20229 / NCIMB 8711 / NCTC 7292 / S-41).